A 117-amino-acid chain; its full sequence is uncharacterized protein (117 aa).

This is an uncharacterized protein from Pasteurella multocida (strain Pm70).